A 641-amino-acid chain; its full sequence is Single-strand DNA endonuclease 1 (641 aa).

An N-domain region spans residues 1-90; sequence MGVKNLWDIL…SLKLATYRRR (90 aa). The segment at 2-97 is XPG-N domain; sequence GVKNLWDILE…RRRLGSISHA (96 aa). Mg(2+) contacts are provided by D30, D76, E144, E146, D165, D167, and D217. Residues 132–217 form an XPG-I domain region; sequence MALGIPCLDG…ISLAVLLGSD (86 aa). 2 I-domain regions span residues 132–220 and 132–221; these read MALG…DYSN and MALG…YSNG. A 5'-3' exonuclease domain region spans residues 217 to 350; that stretch reads DYSNGVNGFG…ILPKIAEREL (134 aa). Disordered regions lie at residues 428-448 and 572-615; these read KGEEKKQKRRARPKKSGQAAV and VGSH…RVHH. Residues 580–590 show a composition bias toward gly residues; that stretch reads DGGGGGGGGVA.

The protein belongs to the XPG/RAD2 endonuclease family. GEN subfamily. It depends on Mg(2+) as a cofactor. As to expression, highly expressed in shoot apical meristem (SAM) and young leaves. Expressed in roots, flag leaf and panicles.

Its subcellular location is the nucleus. Functionally, single-stranded DNA endonuclease activity in vitro. May not be active as double-stranded DNA endonuclease. Endonuclease which cleaves flap structures at the junction between single-stranded DNA and double-stranded DNA with a specific cleavage site in the 5' overhang strand exactly one nucleotide 3' of the branch point. Structure- and sequence-specific nuclease that resolves holliday junctions (HJs) by symmetrically oriented incisions in two opposing strands near the junction point, thus leading to ligatable products; HJs are physical links between homologous DNA molecules that arise as central intermediary structures during homologous recombination and repair in meiotic and somatic cells. Probably involved in the resolution of toxic replication structures to ensure genome stability, and to maintain telomere integrity and replication. The chain is Single-strand DNA endonuclease 1 from Oryza sativa subsp. japonica (Rice).